Reading from the N-terminus, the 46-residue chain is PhoP/PhoQ regulator MgrB (46 aa).

The chain crosses the membrane as a helical span at residues 6–26 (WVALVVVVLACLLLWAQVFNM).

The protein belongs to the MgrB family. As to quaternary structure, may form homooligomers. Probably interacts with the periplasmic domain of PhoQ.

It is found in the cell inner membrane. Functionally, phoP-regulated transcription is redox-sensitive, being activated when the periplasm becomes more reducing. MgrB acts between DsbA/DsbB and PhoP/PhoQ in this pathway. Represses PhoP/PhoQ signaling, possibly by binding to the periplasmic domain of PhoQ, altering its activity and that of downstream effector PhoP. In Escherichia coli O6:K15:H31 (strain 536 / UPEC), this protein is PhoP/PhoQ regulator MgrB.